The sequence spans 154 residues: OCIA domain-containing protein 2 (154 aa).

The tract at residues 1–23 (MASVSTHENQEKGPHLPPPSKQS) is disordered. Residues 1–120 (MASVSTHENQ…HSFEGQLRGA (120 aa)) form the OCIA domain. Lysine 41 carries the N6-acetyllysine modification.

Interacts (via OCIA domain) with OCIAD1/ASRIJ and STAT3.

Its subcellular location is the endosome. The protein localises to the mitochondrion. It is found in the mitochondrion inner membrane. In terms of biological role, has an essential role in the assembly of mitochondrial respiratory chain complex III. Is also required for STAT3 activation and plays a role in cell migration. This is OCIA domain-containing protein 2 (OCIAD2) from Bos taurus (Bovine).